Here is a 347-residue protein sequence, read N- to C-terminus: Quinolinate synthase (347 aa).

Residues His47 and Ser68 each contribute to the iminosuccinate site. [4Fe-4S] cluster is bound at residue Cys113. Iminosuccinate is bound by residues 139 to 141 and Ser156; that span reads YAN. Cys200 serves as a coordination point for [4Fe-4S] cluster. Iminosuccinate is bound by residues 226–228 and Thr243; that span reads HPE. Cys297 serves as a coordination point for [4Fe-4S] cluster.

The protein belongs to the quinolinate synthase family. Type 1 subfamily. The cofactor is [4Fe-4S] cluster.

Its subcellular location is the cytoplasm. It carries out the reaction iminosuccinate + dihydroxyacetone phosphate = quinolinate + phosphate + 2 H2O + H(+). It participates in cofactor biosynthesis; NAD(+) biosynthesis; quinolinate from iminoaspartate: step 1/1. Catalyzes the condensation of iminoaspartate with dihydroxyacetone phosphate to form quinolinate. This chain is Quinolinate synthase, found in Salmonella heidelberg (strain SL476).